Here is a 656-residue protein sequence, read N- to C-terminus: Tetratricopeptide repeat protein 30 homolog (656 aa).

9 TPR repeats span residues 9-42 (EGEFTSTIYTLIHEHKFNDAIRILQYQHERNPKN), 43-76 (LAALSLLAYCYYYTQDFMNAADCYSQLSYNFPQY), 141-174 (AAVIINTACIDYKEGNYEEALKKFNEATEFSGYQ), 176-208 (GLAYSIALCHYRRGDYDSALKLISEIINRGVKD), 238-271 (IEAFNLKFAIYYRTKDFKAAKESLTDMPPRNEHD), 378-412 (RKTAIEIQIKKEQKTTDSDDSLEMRNLIESYDDSL), 416-449 (LPVLMTYAKYYWDKRDYQAVEKLFRNSVDYCKEH), 451-484 (TWKLNVAHTIFMQEKKYKDAAAFYEPIVHKKYDD), and 537-570 (SIISLVIGSLYCSKGNFEFGISRVVKALEPPEKK).

It belongs to the TTC30/dfy-1/fleer family. Component of the IFT complex B composed of at least che-2, che-13, dyf-1, dyf-3, dyf-6, dyf-11, dyf-13, ift-20, ift-74, ift-81, ifta-2, osm-1, osm-5 and osm-6. As to expression, expressed in most amphid, both phasmid and several labial-quadrant neurons.

It is found in the cell projection. Its subcellular location is the cilium. Plays a role in anterograde intraflagellar transport (IFT), the process by which cilia precursors are transported from the base of the cilium to the site of their incorporation at the tip. Specifically required for the kinesin osm-3 to dock onto and move the IFT particles which contain these precursors. Component of the intraflagellar transport (IFT) complex B required for transport of proteins in the motile cilium. May be required for ciliary entrance and transport of specific ciliary cargo proteins such as che-3 which are related to motility. Required for polyglutamylation of axonemal tubulin in sensory cilia. The chain is Tetratricopeptide repeat protein 30 homolog from Caenorhabditis elegans.